A 156-amino-acid chain; its full sequence is Small ribosomal subunit protein uS7 (156 aa).

It belongs to the universal ribosomal protein uS7 family. As to quaternary structure, part of the 30S ribosomal subunit. Contacts proteins S9 and S11.

In terms of biological role, one of the primary rRNA binding proteins, it binds directly to 16S rRNA where it nucleates assembly of the head domain of the 30S subunit. Is located at the subunit interface close to the decoding center, probably blocks exit of the E-site tRNA. This Alkaliphilus metalliredigens (strain QYMF) protein is Small ribosomal subunit protein uS7.